Reading from the N-terminus, the 455-residue chain is Kynurenine--oxoglutarate transaminase 3 (455 aa).

Glycine 72 contacts substrate. An N6-acetyllysine; alternate modification is found at lysine 117. At lysine 117 the chain carries N6-succinyllysine; alternate. Asparagine 219 is a substrate binding site. The residue at position 281 (lysine 281) is an N6-(pyridoxal phosphate)lysine. Residue arginine 430 coordinates substrate.

This sequence belongs to the class-I pyridoxal-phosphate-dependent aminotransferase family. In terms of assembly, homodimer. Pyridoxal 5'-phosphate serves as cofactor. As to expression, widely expressed, with higher expression levels in liver, kidney, heart and neuroendocrine tissues.

It carries out the reaction L-kynurenine + 2-oxoglutarate = kynurenate + L-glutamate + H2O. The catalysed reaction is L-kynurenine + glyoxylate = kynurenate + glycine + H2O. It catalyses the reaction 3-hydroxy-L-kynurenine + glyoxylate = xanthurenate + glycine + H2O. The enzyme catalyses an S-substituted L-cysteine + H2O = a thiol + pyruvate + NH4(+). The protein operates within amino-acid degradation; L-kynurenine degradation; kynurenate from L-kynurenine: step 1/2. Kynurenine transamination is competitively inhibited by cysteine, glutamine, histidine, methionine, leucine, or phenylalanine. Catalyzes the irreversible transamination of the L-tryptophan metabolite L-kynurenine to form kynurenic acid (KA), an intermediate in the tryptophan catabolic pathway which is also a broad spectrum antagonist of the three ionotropic excitatory amino acid receptors among others. May catalyze the beta-elimination of S-conjugates and Se-conjugates of L-(seleno)cysteine, resulting in the cleavage of the C-S or C-Se bond. Has transaminase activity towards L-kynurenine, tryptophan, phenylalanine, serine, cysteine, methionine, histidine, glutamine and asparagine with glyoxylate as an amino group acceptor (in vitro). Has lower activity with 2-oxoglutarate as amino group acceptor (in vitro). The protein is Kynurenine--oxoglutarate transaminase 3 (Kyat3) of Mus musculus (Mouse).